The primary structure comprises 180 residues: uncharacterized protein (180 aa).

The next 2 helical transmembrane spans lie at 37 to 59 and 128 to 147; these read VLHA…FPSF and AGSA…VLFV.

It is found in the cell membrane. This is an uncharacterized protein from Treponema pallidum (strain Nichols).